The sequence spans 224 residues: Oxygen-evolving enhancer protein 3-1, chloroplastic (224 aa).

The N-terminal 44 residues, 1–44, are a transit peptide targeting the chloroplast; the sequence is MASMGGLHGASPAVLEGSLKINGSSRLNGSGRVAVAQRSRLVVR. Residues 45–75 constitute a thylakoid transit peptide; sequence AQQSEETSRRSVIGLVAAGLAGGSFVQAVLA. Phosphothreonine is present on T189. Position 209 is a phosphotyrosine (Y209). Phosphothreonine is present on T212.

The protein belongs to the PsbQ family. Expressed in green tissue, with high steady-state mRNA levels in leaves. Not expressed in roots.

The protein localises to the plastid. Its subcellular location is the chloroplast thylakoid membrane. In terms of biological role, required for photosystem II assembly/stability and photoautotrophic growth under low light conditions. This chain is Oxygen-evolving enhancer protein 3-1, chloroplastic (PSBQ1), found in Arabidopsis thaliana (Mouse-ear cress).